We begin with the raw amino-acid sequence, 201 residues long: Small ribosomal subunit protein uS4 (201 aa).

Residues 22–47 (TGKELARRPYAPGDHGNDRRGKLSEY) are disordered. One can recognise an S4 RNA-binding domain in the interval 93–153 (RRLDNMVYRL…EKSKNLDVIK (61 aa)).

This sequence belongs to the universal ribosomal protein uS4 family. Part of the 30S ribosomal subunit. Contacts protein S5. The interaction surface between S4 and S5 is involved in control of translational fidelity.

Its function is as follows. One of the primary rRNA binding proteins, it binds directly to 16S rRNA where it nucleates assembly of the body of the 30S subunit. With S5 and S12 plays an important role in translational accuracy. This chain is Small ribosomal subunit protein uS4, found in Limosilactobacillus fermentum (strain NBRC 3956 / LMG 18251) (Lactobacillus fermentum).